The following is a 959-amino-acid chain: Isoleucine--tRNA ligase (959 aa).

A 'HIGH' region motif is present at residues proline 60–histidine 70. Glutamate 569 contributes to the L-isoleucyl-5'-AMP binding site. The 'KMSKS' region signature appears at lysine 610–serine 614. Lysine 613 contacts ATP. Positions 928, 931, 948, and 951 each coordinate Zn(2+).

The protein belongs to the class-I aminoacyl-tRNA synthetase family. IleS type 1 subfamily. Monomer. The cofactor is Zn(2+).

The protein resides in the cytoplasm. It catalyses the reaction tRNA(Ile) + L-isoleucine + ATP = L-isoleucyl-tRNA(Ile) + AMP + diphosphate. In terms of biological role, catalyzes the attachment of isoleucine to tRNA(Ile). As IleRS can inadvertently accommodate and process structurally similar amino acids such as valine, to avoid such errors it has two additional distinct tRNA(Ile)-dependent editing activities. One activity is designated as 'pretransfer' editing and involves the hydrolysis of activated Val-AMP. The other activity is designated 'posttransfer' editing and involves deacylation of mischarged Val-tRNA(Ile). This Rippkaea orientalis (strain PCC 8801 / RF-1) (Cyanothece sp. (strain PCC 8801)) protein is Isoleucine--tRNA ligase.